The sequence spans 666 residues: Hybrid PKS-NRPS synthetase pytA (666 aa).

Residues 1-340 (MDPQQRLLLE…GTNAHAILEE (340 aa)) form the Ketosynthase family 3 (KS3) domain. Catalysis depends on for beta-ketoacyl synthase activity residues Cys-87, His-222, and His-260. The segment at 455–665 (VFTGQGAQWF…VFVHSLVIKR (211 aa)) is malonyl-CoA:ACP transacylase (MAT) domain. The For malonyltransferase activity role is filled by Ser-548.

In the C-terminal section; belongs to the NRP synthetase family.

The protein operates within secondary metabolite biosynthesis. In terms of biological role, hybrid PKS-NRPS synthetase; part of the gene cluster that mediates the biosynthesis of pyranterreones, a family of antioxidative compounds. The first step of pyranonigrins biosynthesis is performed by the hybrid PKS-NRPS synthetase pytA that condenses 4 malonyl-CoA units ato the acetyl starter unit by the modular PKS of pytA. The acyl chain is then connected to an L-serine through the amide bond by the modular NRPS of pytA. A tetramic acid is formed and released from the PKS-NRPS pytA to give pyranterreone 5 with the help of the thioesterase pytI. Pyranterreone 5 could be methylated by pytC to afford pyranterreone 6. Both pyranterreones 5 and 6 are subsequently oxidized by the FAD-linked oxidoreductase pytB and the cytochrome P450 monooxygenase pytD to form the fused gamma-pyrone core, resulting in pyranterreones 7 and 11, respectively. The hydroxy group at C-8 of pyranterreones 7 and 11 are dehydrated by the aspartyl protease pytH to form a delta-7 double bond to give pyranterreones 3 and 1, 2 accordingly. The exo-methylene of pyranterreone 3 could be reduced into a pendant methyl by reductase pytE to provide pyranterreone 4, also known as cordylactam. Pyranterreone 4 can be reconverted to pyranterreone 3 through pytB-catalyzed dehydrogenation or further oxidized to pyranterreones 9 and 10. The chain is Hybrid PKS-NRPS synthetase pytA from Aspergillus terreus (strain NIH 2624 / FGSC A1156).